The following is a 286-amino-acid chain: ATP synthase gamma chain (286 aa).

The protein belongs to the ATPase gamma chain family. F-type ATPases have 2 components, CF(1) - the catalytic core - and CF(0) - the membrane proton channel. CF(1) has five subunits: alpha(3), beta(3), gamma(1), delta(1), epsilon(1). CF(0) has three main subunits: a, b and c.

The protein localises to the cell inner membrane. Functionally, produces ATP from ADP in the presence of a proton gradient across the membrane. The gamma chain is believed to be important in regulating ATPase activity and the flow of protons through the CF(0) complex. The protein is ATP synthase gamma chain of Pseudoalteromonas atlantica (strain T6c / ATCC BAA-1087).